The chain runs to 507 residues: GMP synthase [glutamine-hydrolyzing] (507 aa).

The 194-residue stretch at 9–202 folds into the Glutamine amidotransferase type-1 domain; that stretch reads TILIIDFGSQ…VHRIVGVKPG (194 aa). The Nucleophile role is filled by Cys86. Catalysis depends on residues His176 and Glu178. A GMPS ATP-PPase domain is found at 203 to 395; it reads WTMGAYREQA…LGLPDSFIGR (193 aa). 230-236 contacts ATP; that stretch reads SGGVDSS.

Homodimer.

The catalysed reaction is XMP + L-glutamine + ATP + H2O = GMP + L-glutamate + AMP + diphosphate + 2 H(+). It functions in the pathway purine metabolism; GMP biosynthesis; GMP from XMP (L-Gln route): step 1/1. Functionally, catalyzes the synthesis of GMP from XMP. This is GMP synthase [glutamine-hydrolyzing] from Brucella melitensis biotype 1 (strain ATCC 23456 / CCUG 17765 / NCTC 10094 / 16M).